We begin with the raw amino-acid sequence, 131 residues long: Small ribosomal subunit protein uS11 (131 aa).

This sequence belongs to the universal ribosomal protein uS11 family. As to quaternary structure, part of the 30S ribosomal subunit. Interacts with proteins S7 and S18. Binds to IF-3.

Functionally, located on the platform of the 30S subunit, it bridges several disparate RNA helices of the 16S rRNA. Forms part of the Shine-Dalgarno cleft in the 70S ribosome. This chain is Small ribosomal subunit protein uS11, found in Natranaerobius thermophilus (strain ATCC BAA-1301 / DSM 18059 / JW/NM-WN-LF).